A 206-amino-acid chain; its full sequence is Outer-membrane lipoprotein LolB (206 aa).

The N-terminal stretch at 1–21 (MHERNYAVFRLLPLASLLLAA) is a signal peptide. A lipid anchor (N-palmitoyl cysteine) is attached at C22. C22 carries S-diacylglycerol cysteine lipidation.

The protein belongs to the LolB family. In terms of assembly, monomer.

It localises to the cell outer membrane. Its function is as follows. Plays a critical role in the incorporation of lipoproteins in the outer membrane after they are released by the LolA protein. The sequence is that of Outer-membrane lipoprotein LolB from Sodalis glossinidius (strain morsitans).